The primary structure comprises 296 residues: 4-hydroxy-tetrahydrodipicolinate synthase (296 aa).

Residue threonine 49 coordinates pyruvate. Tyrosine 137 serves as the catalytic Proton donor/acceptor. Lysine 166 serves as the catalytic Schiff-base intermediate with substrate. Residue isoleucine 208 coordinates pyruvate.

Belongs to the DapA family. As to quaternary structure, homotetramer; dimer of dimers.

It is found in the cytoplasm. It catalyses the reaction L-aspartate 4-semialdehyde + pyruvate = (2S,4S)-4-hydroxy-2,3,4,5-tetrahydrodipicolinate + H2O + H(+). Its pathway is amino-acid biosynthesis; L-lysine biosynthesis via DAP pathway; (S)-tetrahydrodipicolinate from L-aspartate: step 3/4. Its function is as follows. Catalyzes the condensation of (S)-aspartate-beta-semialdehyde [(S)-ASA] and pyruvate to 4-hydroxy-tetrahydrodipicolinate (HTPA). This Chlorobium phaeovibrioides (strain DSM 265 / 1930) (Prosthecochloris vibrioformis (strain DSM 265)) protein is 4-hydroxy-tetrahydrodipicolinate synthase.